The following is a 927-amino-acid chain: Isoleucine--tRNA ligase (927 aa).

The 'HIGH' region motif lies at 60–70 (PYANGNIHLGH). Glu557 is a binding site for L-isoleucyl-5'-AMP. Residues 598-602 (KMSKS) carry the 'KMSKS' region motif. Lys601 is an ATP binding site. Zn(2+) is bound by residues Cys895, Cys898, Cys915, and Cys918.

This sequence belongs to the class-I aminoacyl-tRNA synthetase family. IleS type 1 subfamily. In terms of assembly, monomer. The cofactor is Zn(2+).

Its subcellular location is the cytoplasm. The enzyme catalyses tRNA(Ile) + L-isoleucine + ATP = L-isoleucyl-tRNA(Ile) + AMP + diphosphate. Catalyzes the attachment of isoleucine to tRNA(Ile). As IleRS can inadvertently accommodate and process structurally similar amino acids such as valine, to avoid such errors it has two additional distinct tRNA(Ile)-dependent editing activities. One activity is designated as 'pretransfer' editing and involves the hydrolysis of activated Val-AMP. The other activity is designated 'posttransfer' editing and involves deacylation of mischarged Val-tRNA(Ile). The chain is Isoleucine--tRNA ligase from Syntrophomonas wolfei subsp. wolfei (strain DSM 2245B / Goettingen).